Consider the following 372-residue polypeptide: Beta-1,4-galactosyltransferase 2 (372 aa).

At 1–15 (MSRLLGGTLERVCKA) the chain is on the cytoplasmic side. The helical; Signal-anchor for type II membrane protein transmembrane segment at 16–36 (VLLLCLLHFLVAVILYFDVYA) threads the bilayer. At 37 to 372 (QHLAFFSRFS…GRPPSWPPRG (336 aa)) the chain is on the lumenal side. The segment at 56–97 (PAASSSSSSSNCSRPNATASSSGLPEVPSALPGPTAPTLPPC) is disordered. Asparagine 66 and asparagine 71 each carry an N-linked (GlcNAc...) asparagine glycan. Residues 66–78 (NCSRPNATASSSG) show a composition bias toward polar residues. A disulfide bond links cysteine 97 and cysteine 139. UDP-alpha-D-galactose contacts are provided by residues 150–154 (PFRHR), 189–191 (FNR), 217–218 (VD), and tryptophan 278. Cysteines 211 and 230 form a disulfide. Residue aspartate 218 participates in Mn(2+) binding. Position 280–283 (280–283 (GEDD)) interacts with N-acetyl-D-glucosamine. Histidine 311 is a Mn(2+) binding site. 311 to 313 (HDR) contacts UDP-alpha-D-galactose. Arginine 323 serves as a coordination point for N-acetyl-D-glucosamine. Asparagine 357 carries N-linked (GlcNAc...) asparagine glycosylation.

Belongs to the glycosyltransferase 7 family. Requires Mn(2+) as cofactor. Weakly expressed in various tissues. Highest expression in prostate, testis, ovary, intestine, muscle, and in fetal brain.

It is found in the golgi apparatus. It localises to the golgi stack membrane. The enzyme catalyses D-glucose + UDP-alpha-D-galactose = lactose + UDP + H(+). It carries out the reaction an N-acetyl-beta-D-glucosaminyl derivative + UDP-alpha-D-galactose = a beta-D-galactosyl-(1-&gt;4)-N-acetyl-beta-D-glucosaminyl derivative + UDP + H(+). The catalysed reaction is N-acetyl-D-glucosamine + UDP-alpha-D-galactose = beta-D-galactosyl-(1-&gt;4)-N-acetyl-D-glucosamine + UDP + H(+). The protein operates within protein modification; protein glycosylation. Responsible for the synthesis of complex-type N-linked oligosaccharides in many glycoproteins as well as the carbohydrate moieties of glycolipids. Can produce lactose. The sequence is that of Beta-1,4-galactosyltransferase 2 from Homo sapiens (Human).